Here is a 456-residue protein sequence, read N- to C-terminus: Palmitoyltransferase PFA4 (456 aa).

Residues Met1–Val9 lie on the Cytoplasmic side of the membrane. Residues Trp10 to Ile30 form a helical membrane-spanning segment. Topologically, residues Trp31–Glu37 are lumenal. A helical transmembrane segment spans residues Ile38 to Trp58. The Cytoplasmic portion of the chain corresponds to Asn59–Gly138. The region spanning Arg95–Leu145 is the DHHC domain. Cys125 (S-palmitoyl cysteine intermediate) is an active-site residue. The helical transmembrane segment at His139–Val159 threads the bilayer. Over Arg160–Asp176 the chain is Lumenal. Residues Val177–Phe197 form a helical membrane-spanning segment. Topologically, residues Ser198–His456 are cytoplasmic. The segment at Pro284–Tyr377 is disordered. Positions Pro285–Pro298 are enriched in pro residues. Polar residues predominate over residues Asn309–Leu321. The segment covering Ser337–Asn352 has biased composition (basic and acidic residues).

The protein belongs to the DHHC palmitoyltransferase family. PFA4 subfamily.

Its subcellular location is the endoplasmic reticulum membrane. It catalyses the reaction L-cysteinyl-[protein] + hexadecanoyl-CoA = S-hexadecanoyl-L-cysteinyl-[protein] + CoA. Its function is as follows. Mediates the reversible addition of palmitate to target proteins, thereby regulating their membrane association and biological function. Responsible for the modification of a subset of proteins that are critical in cryptococcal pathogenesis, with substrates involved in cell wall synthesis, signal transduction, and membrane trafficking. Palmitoylates chitin synthase CHS3. This is Palmitoyltransferase PFA4 from Cryptococcus neoformans var. grubii serotype A (strain H99 / ATCC 208821 / CBS 10515 / FGSC 9487) (Filobasidiella neoformans var. grubii).